The following is a 174-amino-acid chain: Large ribosomal subunit protein uL6 (174 aa).

Belongs to the universal ribosomal protein uL6 family. In terms of assembly, part of the 50S ribosomal subunit.

Its function is as follows. This protein binds to the 23S rRNA, and is important in its secondary structure. It is located near the subunit interface in the base of the L7/L12 stalk, and near the tRNA binding site of the peptidyltransferase center. The chain is Large ribosomal subunit protein uL6 from Stenotrophomonas maltophilia (strain R551-3).